The following is a 564-amino-acid chain: Proline--tRNA ligase (564 aa).

This sequence belongs to the class-II aminoacyl-tRNA synthetase family. ProS type 1 subfamily. Homodimer.

The protein resides in the cytoplasm. The catalysed reaction is tRNA(Pro) + L-proline + ATP = L-prolyl-tRNA(Pro) + AMP + diphosphate. In terms of biological role, catalyzes the attachment of proline to tRNA(Pro) in a two-step reaction: proline is first activated by ATP to form Pro-AMP and then transferred to the acceptor end of tRNA(Pro). As ProRS can inadvertently accommodate and process non-cognate amino acids such as alanine and cysteine, to avoid such errors it has two additional distinct editing activities against alanine. One activity is designated as 'pretransfer' editing and involves the tRNA(Pro)-independent hydrolysis of activated Ala-AMP. The other activity is designated 'posttransfer' editing and involves deacylation of mischarged Ala-tRNA(Pro). The misacylated Cys-tRNA(Pro) is not edited by ProRS. In Xanthomonas axonopodis pv. citri (strain 306), this protein is Proline--tRNA ligase.